Reading from the N-terminus, the 130-residue chain is Small ribosomal subunit protein uS9 (130 aa).

This sequence belongs to the universal ribosomal protein uS9 family.

The chain is Small ribosomal subunit protein uS9 from Pseudomonas fluorescens (strain SBW25).